The sequence spans 79 residues: MGSLSIWHWIVVIAVVLLLFGRGKISDLMGDVAQGIKSFKKGLQDDEKTAEKPDPVKSIDHNAPTAAAPTRTDVGSKAV.

Residues 1–21 (MGSLSIWHWIVVIAVVLLLFG) traverse the membrane as a helical segment. Positions 43 to 60 (LQDDEKTAEKPDPVKSID) are enriched in basic and acidic residues. The segment at 43–79 (LQDDEKTAEKPDPVKSIDHNAPTAAAPTRTDVGSKAV) is disordered.

The protein belongs to the TatA/E family. As to quaternary structure, the Tat system comprises two distinct complexes: a TatABC complex, containing multiple copies of TatA, TatB and TatC subunits, and a separate TatA complex, containing only TatA subunits. Substrates initially bind to the TatABC complex, which probably triggers association of the separate TatA complex to form the active translocon.

The protein localises to the cell inner membrane. Its function is as follows. Part of the twin-arginine translocation (Tat) system that transports large folded proteins containing a characteristic twin-arginine motif in their signal peptide across membranes. TatA could form the protein-conducting channel of the Tat system. The sequence is that of Sec-independent protein translocase protein TatA from Rhodopseudomonas palustris (strain BisB5).